Here is a 661-residue protein sequence, read N- to C-terminus: PAN2-PAN3 deadenylation complex subunit PAN3 (661 aa).

Disordered stretches follow at residues 1–26 (MASA…AREN) and 53–130 (DPHK…LRQD). The segment at 26–55 (NAKDTLCRNITIYGRCRYEDKGCAFNHDPH) adopts a C3H1-type zinc-finger fold. Positions 75-102 (SFTPSLLSSNGSSPTSTPATTKKMTTIS) are enriched in low complexity. Over residues 115-130 (SVVSRSNASTPGLRQD) the composition is skewed to polar residues. Residues 263–524 (QTLPNTQLPA…NIDIFITGIS (262 aa)) are pseudokinase domain. ATP is bound by residues arginine 315, 364 to 371 (DYHPLSKT), and 424 to 425 (SK). Positions 525–563 (SQLMSTFDSALHLDDQLTSDLSRELENGRLVRLMTKLNF) form a coiled coil. The segment at 564–661 (VNERPEYEHD…ALMKPARRMH (98 aa)) is knob domain.

Belongs to the protein kinase superfamily. PAN3 family. As to quaternary structure, homodimer. Forms a heterotrimer with a catalytic subunit pan2 to form the poly(A)-nuclease (PAN) deadenylation complex. Interacts (via PAM-2 motif) with poly(A)-binding protein pab1 (via PABC domain), conferring substrate specificity of the enzyme complex.

The protein localises to the cytoplasm. Functionally, regulatory subunit of the poly(A)-nuclease (PAN) deadenylation complex, one of two cytoplasmic mRNA deadenylases involved in mRNA turnover. PAN specifically shortens poly(A) tails of RNA and the activity is stimulated by poly(A)-binding protein pab1. PAN deadenylation is followed by rapid degradation of the shortened mRNA tails by the CCR4-NOT complex. Deadenylated mRNAs are then degraded by two alternative mechanisms, namely exosome-mediated 3'-5' exonucleolytic degradation, or deadenylation-dependent mRNA decaping and subsequent 5'-3' exonucleolytic degradation by xrn1. May also be involved in post-transcriptional maturation of mRNA poly(A) tails. pan3 acts as a positive regulator for PAN activity, recruiting the catalytic subunit pan2 to mRNA via its interaction with RNA and with pab1. The sequence is that of PAN2-PAN3 deadenylation complex subunit PAN3 from Neosartorya fischeri (strain ATCC 1020 / DSM 3700 / CBS 544.65 / FGSC A1164 / JCM 1740 / NRRL 181 / WB 181) (Aspergillus fischerianus).